A 374-amino-acid chain; its full sequence is N-acetyldiaminopimelate deacetylase (374 aa).

Residue Asp69 is part of the active site. Glu128 functions as the Proton acceptor in the catalytic mechanism.

This sequence belongs to the peptidase M20A family. N-acetyldiaminopimelate deacetylase subfamily.

The catalysed reaction is N-acetyl-(2S,6S)-2,6-diaminopimelate + H2O = (2S,6S)-2,6-diaminopimelate + acetate. The protein operates within amino-acid biosynthesis; L-lysine biosynthesis via DAP pathway; LL-2,6-diaminopimelate from (S)-tetrahydrodipicolinate (acetylase route): step 3/3. Functionally, catalyzes the conversion of N-acetyl-diaminopimelate to diaminopimelate and acetate. This is N-acetyldiaminopimelate deacetylase from Bacillus licheniformis (strain ATCC 14580 / DSM 13 / JCM 2505 / CCUG 7422 / NBRC 12200 / NCIMB 9375 / NCTC 10341 / NRRL NRS-1264 / Gibson 46).